We begin with the raw amino-acid sequence, 177 residues long: Large ribosomal subunit protein uL5m (177 aa).

This sequence belongs to the universal ribosomal protein uL5 family.

The protein resides in the mitochondrion. The chain is Large ribosomal subunit protein uL5m (RPL5) from Acanthamoeba castellanii (Amoeba).